A 480-amino-acid polypeptide reads, in one-letter code: UDP-N-acetylmuramate--L-alanine ligase (480 aa).

ATP is bound at residue 127 to 133 (GTHGKTT).

It belongs to the MurCDEF family.

The protein localises to the cytoplasm. The enzyme catalyses UDP-N-acetyl-alpha-D-muramate + L-alanine + ATP = UDP-N-acetyl-alpha-D-muramoyl-L-alanine + ADP + phosphate + H(+). The protein operates within cell wall biogenesis; peptidoglycan biosynthesis. Its function is as follows. Cell wall formation. This Blochmanniella floridana protein is UDP-N-acetylmuramate--L-alanine ligase.